We begin with the raw amino-acid sequence, 286 residues long: Shikimate dehydrogenase (NADP(+)) (286 aa).

Residues 22 to 24 (SRS) and Thr-71 each bind shikimate. The Proton acceptor role is filled by Lys-75. Position 87 (Glu-87) interacts with NADP(+). Residues Asn-96 and Asp-111 each coordinate shikimate. NADP(+) contacts are provided by residues 136-140 (GAGGA), 160-165 (NRTPER), and Ile-225. A shikimate-binding site is contributed by Tyr-227. Gly-248 is a binding site for NADP(+).

The protein belongs to the shikimate dehydrogenase family. As to quaternary structure, homodimer.

The enzyme catalyses shikimate + NADP(+) = 3-dehydroshikimate + NADPH + H(+). Its pathway is metabolic intermediate biosynthesis; chorismate biosynthesis; chorismate from D-erythrose 4-phosphate and phosphoenolpyruvate: step 4/7. Functionally, involved in the biosynthesis of the chorismate, which leads to the biosynthesis of aromatic amino acids. Catalyzes the reversible NADPH linked reduction of 3-dehydroshikimate (DHSA) to yield shikimate (SA). This is Shikimate dehydrogenase (NADP(+)) from Sinorhizobium medicae (strain WSM419) (Ensifer medicae).